A 141-amino-acid chain; its full sequence is Large ribosomal subunit protein uL13 (141 aa).

This sequence belongs to the universal ribosomal protein uL13 family. Part of the 50S ribosomal subunit.

Functionally, this protein is one of the early assembly proteins of the 50S ribosomal subunit, although it is not seen to bind rRNA by itself. It is important during the early stages of 50S assembly. The protein is Large ribosomal subunit protein uL13 of Helicobacter pylori (strain Shi470).